Reading from the N-terminus, the 101-residue chain is Small ribosomal subunit protein bS18c (101 aa).

Belongs to the bacterial ribosomal protein bS18 family. As to quaternary structure, part of the 30S ribosomal subunit.

It is found in the plastid. It localises to the chloroplast. In Gossypium barbadense (Sea Island cotton), this protein is Small ribosomal subunit protein bS18c.